Consider the following 432-residue polypeptide: Histidine--tRNA ligase (432 aa).

Belongs to the class-II aminoacyl-tRNA synthetase family. In terms of assembly, homodimer.

It is found in the cytoplasm. It catalyses the reaction tRNA(His) + L-histidine + ATP = L-histidyl-tRNA(His) + AMP + diphosphate + H(+). This is Histidine--tRNA ligase from Ralstonia nicotianae (strain ATCC BAA-1114 / GMI1000) (Ralstonia solanacearum).